Here is a 1392-residue protein sequence, read N- to C-terminus: DNA-directed RNA polymerase subunit beta (1392 aa).

This sequence belongs to the RNA polymerase beta chain family. The RNAP catalytic core consists of 2 alpha, 1 beta, 1 beta' and 1 omega subunit. When a sigma factor is associated with the core the holoenzyme is formed, which can initiate transcription.

The catalysed reaction is RNA(n) + a ribonucleoside 5'-triphosphate = RNA(n+1) + diphosphate. Functionally, DNA-dependent RNA polymerase catalyzes the transcription of DNA into RNA using the four ribonucleoside triphosphates as substrates. The protein is DNA-directed RNA polymerase subunit beta of Neisseria meningitidis serogroup B (strain ATCC BAA-335 / MC58).